Reading from the N-terminus, the 304-residue chain is UDP-N-acetylenolpyruvoylglucosamine reductase (304 aa).

One can recognise an FAD-binding PCMH-type domain in the interval 33–198; the sequence is RVGGPADILV…IEATIELESG (166 aa). The active site involves Arg177. Ser227 (proton donor) is an active-site residue. Glu297 is a catalytic residue.

Belongs to the MurB family. It depends on FAD as a cofactor.

Its subcellular location is the cytoplasm. The enzyme catalyses UDP-N-acetyl-alpha-D-muramate + NADP(+) = UDP-N-acetyl-3-O-(1-carboxyvinyl)-alpha-D-glucosamine + NADPH + H(+). It functions in the pathway cell wall biogenesis; peptidoglycan biosynthesis. Its function is as follows. Cell wall formation. This chain is UDP-N-acetylenolpyruvoylglucosamine reductase, found in Clostridium perfringens (strain SM101 / Type A).